A 150-amino-acid polypeptide reads, in one-letter code: Large ribosomal subunit protein bL9 (150 aa).

This sequence belongs to the bacterial ribosomal protein bL9 family.

Binds to the 23S rRNA. In Shewanella loihica (strain ATCC BAA-1088 / PV-4), this protein is Large ribosomal subunit protein bL9.